A 326-amino-acid polypeptide reads, in one-letter code: Fructose-1,6-bisphosphatase class 1 (326 aa).

It belongs to the FBPase class 1 family. As to quaternary structure, homotetramer.

It localises to the cytoplasm. The catalysed reaction is beta-D-fructose 1,6-bisphosphate + H2O = beta-D-fructose 6-phosphate + phosphate. It functions in the pathway carbohydrate biosynthesis; gluconeogenesis. The chain is Fructose-1,6-bisphosphatase class 1 from Methylobacterium sp. (strain 4-46).